Here is a 1320-residue protein sequence, read N- to C-terminus: Sal-like protein 3 (1320 aa).

Over residues methionine 1–histidine 11 the composition is skewed to basic residues. Residues methionine 1–glutamate 49 form a disordered region. A compositionally biased stretch (low complexity) spans glycine 40–glutamate 49. The segment at serine 51–cysteine 73 adopts a C2H2-type 1; atypical zinc-finger fold. Disordered regions lie at residues aspartate 84–methionine 166 and leucine 271–asparagine 367. Residues alanine 88–alanine 100 are compositionally biased toward pro residues. Position 109 is a phosphoserine (serine 109). Residues serine 121 to glutamate 131 are compositionally biased toward basic and acidic residues. Positions proline 143–glutamate 160 are enriched in pro residues. A compositionally biased stretch (low complexity) spans leucine 271–alanine 289. The segment covering histidine 295 to alanine 311 has biased composition (polar residues). Low complexity-rich tracts occupy residues serine 323–valine 342 and proline 355–asparagine 367. 2 C2H2-type zinc fingers span residues histidine 427–histidine 449 and phenylalanine 455–histidine 477. Residues glycine 534–glycine 623 are disordered. The span at glycine 543–threonine 554 shows a compositional bias: polar residues. Residues proline 555–serine 568 are compositionally biased toward low complexity. Residues glutamate 569 to glycine 583 are compositionally biased toward polar residues. 3 C2H2-type zinc fingers span residues asparagine 692–histidine 714, phenylalanine 720–histidine 742, and histidine 752–histidine 774. Disordered regions lie at residues serine 807–proline 846 and valine 878–glycine 972. The segment covering phenylalanine 809–glutamate 823 has biased composition (acidic residues). Low complexity-rich tracts occupy residues proline 834 to proline 846 and arginine 902 to serine 923. Phosphoserine is present on serine 932. C2H2-type zinc fingers lie at residues threonine 997–histidine 1019, phenylalanine 1025–histidine 1047, histidine 1133–histidine 1155, and phenylalanine 1161–histidine 1183. Serine 1197 is subject to Phosphoserine.

Belongs to the sal C2H2-type zinc-finger protein family. As to expression, in adult brain, testis and kidney. In lower levels also in adult ovaries and embryonic stem cells. In embryo in developing neuroectoderm of brain, inner ear and spinal cord. Also weakly and transiently expressed in embryonic branchial arches, notochord, limb buds and heart.

It localises to the nucleus. Its function is as follows. Probable transcription factor. This Mus musculus (Mouse) protein is Sal-like protein 3 (Sall3).